A 228-amino-acid chain; its full sequence is Large ribosomal subunit protein bL25 (228 aa).

The segment at 196–228 (EEAAVAEAQSAESAEGKAEAEAEATNEKNKSEA) is disordered. A compositionally biased stretch (basic and acidic residues) spans 209 to 228 (AEGKAEAEAEATNEKNKSEA).

Belongs to the bacterial ribosomal protein bL25 family. CTC subfamily. In terms of assembly, part of the 50S ribosomal subunit; part of the 5S rRNA/L5/L18/L25 subcomplex. Contacts the 5S rRNA. Binds to the 5S rRNA independently of L5 and L18.

In terms of biological role, this is one of the proteins that binds to the 5S RNA in the ribosome where it forms part of the central protuberance. The polypeptide is Large ribosomal subunit protein bL25 (Methylorubrum extorquens (strain PA1) (Methylobacterium extorquens)).